The sequence spans 367 residues: Tetraacyldisaccharide 4'-kinase (367 aa).

68–75 (VLGGSGKT) lines the ATP pocket.

The protein belongs to the LpxK family.

The enzyme catalyses a lipid A disaccharide + ATP = a lipid IVA + ADP + H(+). It participates in glycolipid biosynthesis; lipid IV(A) biosynthesis; lipid IV(A) from (3R)-3-hydroxytetradecanoyl-[acyl-carrier-protein] and UDP-N-acetyl-alpha-D-glucosamine: step 6/6. In terms of biological role, transfers the gamma-phosphate of ATP to the 4'-position of a tetraacyldisaccharide 1-phosphate intermediate (termed DS-1-P) to form tetraacyldisaccharide 1,4'-bis-phosphate (lipid IVA). This is Tetraacyldisaccharide 4'-kinase from Chlamydia caviae (strain ATCC VR-813 / DSM 19441 / 03DC25 / GPIC) (Chlamydophila caviae).